A 52-amino-acid polypeptide reads, in one-letter code: MSRDLVTIPRDVWNDMQGYIDSLERENDSLKNQLMEADEYVAELEEKLNGTS.

The polypeptide is Gene 5.9 protein (5.9) (Enterobacteria phage T3 (Bacteriophage T3)).